The chain runs to 544 residues: Nucleosome assembly protein 1-like 3 (544 aa).

2 disordered regions span residues 1–109 (MAEA…LFLD) and 168–345 (PTEE…KKED). Low complexity predominate over residues 35 to 83 (SNSSSSTNSCSSSGSSSSGSSSSSSSSSSSSSSSSSSSSGSSGSSSNGS). Positions 168–192 (PTEEECEWNSEEEFSGDEEMQDDTP) are enriched in acidic residues. Composition is skewed to basic and acidic residues over residues 207-228 (CNEKAEVKEEGTHVPEEVPEAK), 235-277 (PKET…KADS), and 314-332 (PAREAQKRVPETRPEEGVN).

The protein belongs to the nucleosome assembly protein (NAP) family. In terms of tissue distribution, expressed in brain.

Its subcellular location is the nucleus. The protein resides in the cytoplasm. This is Nucleosome assembly protein 1-like 3 (Nap1l3) from Mus musculus (Mouse).